Reading from the N-terminus, the 982-residue chain is E3 ubiquitin-protein ligase CBL-B (982 aa).

Residues 35–167 (PPKQAAADRR…KAIFPNGQFQ (133 aa)) are 4H. One can recognise a Cbl-PTB domain in the interval 35–343 (PPKQAAADRR…GRSYNPDLTG (309 aa)). Positions 168–240 (GDNFRITKAD…FEFDIFTRLF (73 aa)) are EF-hand-like. Residues Asp221, Thr223, Asn225, Tyr227, and Glu232 each contribute to the Ca(2+) site. The segment at 241–343 (QPWGSILRNW…GRSYNPDLTG (103 aa)) is SH2-like. Position 282 is a phosphoserine; by PKC/PRKCQ (Ser282). Residue Arg286 coordinates 4-O-phospho-L-tyrosine. Residues 344-372 (LCEPTPHDHIKVTQEQYELYCEMGSTFQL) are linker. Residue Tyr363 is modified to Phosphotyrosine. The segment at 373-412 (CKICAENDKDVKIEPCGHLMCTSCLTAWQESDGQGCPFCR) adopts an RING-type zinc-finger fold. A disordered region spans residues 465 to 588 (ASVRKCTDRQ…SVPSRDQPMP (124 aa)). The segment covering 473 to 486 (RQNSPVTSPGSSPL) has biased composition (polar residues). Phosphoserine occurs at positions 476, 480, 484, 521, 525, and 529. An interaction with VAV1 region spans residues 543–567 (PLPAPPPPLRDPPPPPERPPPIPPD). A compositionally biased stretch (pro residues) spans 544–566 (LPAPPPPLRDPPPPPERPPPIPP). The residue at position 633 (Ser633) is a Phosphoserine. Phosphotyrosine is present on residues Tyr664 and Tyr708. 2 disordered regions span residues 702-723 (EDDDDEYKIPSSHPVSLNSQPS) and 745-929 (THGA…EAAL). A compositionally biased stretch (polar residues) spans 714–723 (HPVSLNSQPS). Residues 819-828 (PSLPPPPPPA) are compositionally biased toward pro residues. Low complexity predominate over residues 838–848 (PPGSSSRPSSG). Residues 884 to 899 (RASQDYDQLPSSSDGS) show a composition bias toward polar residues. Tyr889 carries the phosphotyrosine modification. The tract at residues 891 to 927 (QLPSSSDGSQAPARPPKPRPRRTAPEIHHRKPHGPEA) is interaction with SH3KBP1. Residues 906–922 (PKPRPRRTAPEIHHRKP) show a composition bias toward basic residues. A UBA domain is found at 931–970 (NVDAKIAKLMGEGYAFEEVKRALEIAQNNVEVARSILREF).

In terms of assembly, interacts with SH3 domain-containing proteins LCK, CRK and SORBS1. Interacts with LCP2 and ZAP70. Interacts with CBL. Interacts with SH3 domain-containing proteins VAV1, FYN, FGR, PLCG1, GRB2, CRKL, PIK3R1 and SH3KBP1/CIN85. Identified in heterotrimeric complexes with SH3KBP1/CIN85, CD2AP and ARHGEF7, where one CBLB peptide binds two copies of the other protein. Interacts with poly-ubiquitinated proteins. Dimerization is required for the binding of poly-ubiquitin, but not for the binding of mono-ubiquitin. Interacts with EGFR (phosphorylated). Interacts with IFT20. In terms of processing, phosphorylated on tyrosine and serine residues upon TCR or BCR activation. Phosphorylated on Tyr-664 and Tyr-708 in adipocytes following insulin stimulation. Auto-ubiquitinated upon EGF-mediated cell activation or upon T-cell costimulation by CD28; which promotes proteasomal degradation.

Its subcellular location is the cytoplasm. The catalysed reaction is S-ubiquitinyl-[E2 ubiquitin-conjugating enzyme]-L-cysteine + [acceptor protein]-L-lysine = [E2 ubiquitin-conjugating enzyme]-L-cysteine + N(6)-ubiquitinyl-[acceptor protein]-L-lysine.. Its pathway is protein modification; protein ubiquitination. E3 ubiquitin-protein ligase which accepts ubiquitin from specific E2 ubiquitin-conjugating enzymes, and transfers it to substrates, generally promoting their degradation by the proteasome. Negatively regulates TCR (T-cell receptor), BCR (B-cell receptor) and FCER1 (high affinity immunoglobulin epsilon receptor) signal transduction pathways. In naive T-cells, inhibits VAV1 activation upon TCR engagement and imposes a requirement for CD28 costimulation for proliferation and IL-2 production. Also acts by promoting PIK3R1/p85 ubiquitination, which impairs its recruitment to the TCR and subsequent activation. In activated T-cells, inhibits PLCG1 activation and calcium mobilization upon restimulation and promotes anergy. In B-cells, acts by ubiquitinating SYK and promoting its proteasomal degradation. Slightly promotes SRC ubiquitination. May be involved in EGFR ubiquitination and internalization. May be functionally coupled with the E2 ubiquitin-protein ligase UB2D3. In association with CBL, required for proper feedback inhibition of ciliary platelet-derived growth factor receptor-alpha (PDGFRA) signaling pathway via ubiquitination and internalization of PDGFRA. The sequence is that of E3 ubiquitin-protein ligase CBL-B (Cblb) from Mus musculus (Mouse).